A 256-amino-acid polypeptide reads, in one-letter code: Pimeloyl-[acyl-carrier protein] methyl ester esterase (256 aa).

One can recognise an AB hydrolase-1 domain in the interval 15 to 242 (HLVLLHGWGL…AAHAPFISHP (228 aa)). Substrate is bound by residues W22, 82-83 (SL), and 143-147 (FLALQ). The Nucleophile role is filled by S82. Catalysis depends on residues D207 and H235. H235 serves as a coordination point for substrate.

The protein belongs to the AB hydrolase superfamily. Carboxylesterase BioH family. As to quaternary structure, monomer.

The protein resides in the cytoplasm. It catalyses the reaction 6-carboxyhexanoyl-[ACP] methyl ester + H2O = 6-carboxyhexanoyl-[ACP] + methanol + H(+). It participates in cofactor biosynthesis; biotin biosynthesis. The physiological role of BioH is to remove the methyl group introduced by BioC when the pimeloyl moiety is complete. It allows to synthesize pimeloyl-ACP via the fatty acid synthetic pathway through the hydrolysis of the ester bonds of pimeloyl-ACP esters. The polypeptide is Pimeloyl-[acyl-carrier protein] methyl ester esterase (Escherichia coli O8 (strain IAI1)).